A 212-amino-acid polypeptide reads, in one-letter code: GTP-binding protein EngB (212 aa).

The 177-residue stretch at 36 to 212 (TAPEVAFAGR…LRAAVYDAII (177 aa)) folds into the EngB-type G domain. Residues 44 to 51 (GRSNVGKS), 71 to 75 (GRTQE), 91 to 94 (DMPG), 158 to 161 (TKSD), and 192 to 194 (TSS) contribute to the GTP site. 2 residues coordinate Mg(2+): Ser51 and Thr73.

Belongs to the TRAFAC class TrmE-Era-EngA-EngB-Septin-like GTPase superfamily. EngB GTPase family. Requires Mg(2+) as cofactor.

In terms of biological role, necessary for normal cell division and for the maintenance of normal septation. The polypeptide is GTP-binding protein EngB (Zymomonas mobilis subsp. mobilis (strain ATCC 31821 / ZM4 / CP4)).